The sequence spans 437 residues: MSKALPLLTRQGERIAITHGLRTPFARQATAFHGIPALELGRMVVSELLARSEISPDVIEQLVFGQVVQMPEAPNIAREIVLASALSVHTDAWSVSRACATSFQAVANVAESLMIGHIQAGIAGGADSSSVLPIGVSKKLARLLVDASKTRSLAQKLKLFSGLRPRDLLPVAPAVAEYSTGLRMGDSAEQMAKNHGITREQQDALALRSHQRAAHAWQQGLLNDEVMTACVPPWEQPFEQDNNVRAESKMQDYARLRPAFDRRHGTVTAANSTPLTDGAAAVILMTASRARELGIAPLGFLRSYAFSAIDVRQDMLLGPSYASPLALDRAGITLADLSLIDMHEAFAAQTLANLKMFADERFAREVLDRPRALGEVDMERFNVLGGSIAYGHPFAATGARMITQTLNELRRRGGGLGLVTACAAGGLGAAMVLEVDS.

The active-site Acyl-thioester intermediate is C99. Active-site proton acceptor residues include H392 and C422.

The protein belongs to the thiolase-like superfamily. Thiolase family. In terms of assembly, heterotetramer of two alpha chains (FadJ) and two beta chains (FadI).

The protein resides in the cytoplasm. It catalyses the reaction an acyl-CoA + acetyl-CoA = a 3-oxoacyl-CoA + CoA. It functions in the pathway lipid metabolism; fatty acid beta-oxidation. Catalyzes the final step of fatty acid oxidation in which acetyl-CoA is released and the CoA ester of a fatty acid two carbons shorter is formed. This Erwinia tasmaniensis (strain DSM 17950 / CFBP 7177 / CIP 109463 / NCPPB 4357 / Et1/99) protein is 3-ketoacyl-CoA thiolase.